The primary structure comprises 635 residues: Biosynthetic arginine decarboxylase (635 aa).

Residue Lys-100 is modified to N6-(pyridoxal phosphate)lysine. A substrate-binding site is contributed by 282–292 (IDIGGGLGVDY).

It belongs to the Orn/Lys/Arg decarboxylase class-II family. SpeA subfamily. The cofactor is Mg(2+). Pyridoxal 5'-phosphate is required as a cofactor.

It catalyses the reaction L-arginine + H(+) = agmatine + CO2. The protein operates within amine and polyamine biosynthesis; agmatine biosynthesis; agmatine from L-arginine: step 1/1. Its function is as follows. Catalyzes the biosynthesis of agmatine from arginine. This chain is Biosynthetic arginine decarboxylase, found in Pelobacter propionicus (strain DSM 2379 / NBRC 103807 / OttBd1).